The primary structure comprises 389 residues: tRNA(Met) cytidine acetate ligase (389 aa).

ATP is bound by residues 8 to 21 (IAEFNPFHKGHEYL), Gly-97, Asn-153, and Arg-176.

This sequence belongs to the TmcAL family.

It is found in the cytoplasm. It carries out the reaction cytidine(34) in elongator tRNA(Met) + acetate + ATP = N(4)-acetylcytidine(34) in elongator tRNA(Met) + AMP + diphosphate. Its function is as follows. Catalyzes the formation of N(4)-acetylcytidine (ac(4)C) at the wobble position of elongator tRNA(Met), using acetate and ATP as substrates. First activates an acetate ion to form acetyladenylate (Ac-AMP) and then transfers the acetyl group to tRNA to form ac(4)C34. The chain is tRNA(Met) cytidine acetate ligase from Lactococcus lactis subsp. cremoris (strain SK11).